The chain runs to 347 residues: CRISPR-associated endonuclease Cas1 4 (347 aa).

Basic and acidic residues predominate over residues 1 to 21 (MNIENEVHIENASESKREPKP). The segment at 1–25 (MNIENEVHIENASESKREPKPPEGL) is disordered. Mn(2+) contacts are provided by E176, H241, and E256.

It belongs to the CRISPR-associated endonuclease Cas1 family. Homodimer, forms a heterotetramer with a Cas2 homodimer. Requires Mg(2+) as cofactor. The cofactor is Mn(2+).

Functionally, CRISPR (clustered regularly interspaced short palindromic repeat), is an adaptive immune system that provides protection against mobile genetic elements (viruses, transposable elements and conjugative plasmids). CRISPR clusters contain spacers, sequences complementary to antecedent mobile elements, and target invading nucleic acids. CRISPR clusters are transcribed and processed into CRISPR RNA (crRNA). Acts as a dsDNA endonuclease. Involved in the integration of spacer DNA into the CRISPR cassette. This is CRISPR-associated endonuclease Cas1 4 from Methanospirillum hungatei JF-1 (strain ATCC 27890 / DSM 864 / NBRC 100397 / JF-1).